The chain runs to 311 residues: GTP cyclohydrolase FolE2 (311 aa).

Belongs to the GTP cyclohydrolase IV family.

The enzyme catalyses GTP + H2O = 7,8-dihydroneopterin 3'-triphosphate + formate + H(+). It functions in the pathway cofactor biosynthesis; 7,8-dihydroneopterin triphosphate biosynthesis; 7,8-dihydroneopterin triphosphate from GTP: step 1/1. Converts GTP to 7,8-dihydroneopterin triphosphate. This Xanthomonas campestris pv. campestris (strain B100) protein is GTP cyclohydrolase FolE2.